We begin with the raw amino-acid sequence, 75 residues long: Protein B (75 aa).

The protein is Protein B of Dicentrarchus labrax (European seabass).